The chain runs to 101 residues: Urease subunit beta (101 aa).

This sequence belongs to the urease beta subunit family. In terms of assembly, heterotrimer of UreA (gamma), UreB (beta) and UreC (alpha) subunits. Three heterotrimers associate to form the active enzyme.

It localises to the cytoplasm. It catalyses the reaction urea + 2 H2O + H(+) = hydrogencarbonate + 2 NH4(+). The protein operates within nitrogen metabolism; urea degradation; CO(2) and NH(3) from urea (urease route): step 1/1. The sequence is that of Urease subunit beta from Burkholderia ambifaria (strain MC40-6).